Reading from the N-terminus, the 173-residue chain is MTGLNTAGADRDLATAELNRELQDKGFLLTTTEDIINWARNGSLHWMTFGLACCAVEMMQTSMPRYDLERFGTAPRASPRQSDLMIVAGTLTNKMAPALRKVYDQMPEPRYVISMGSCANGGGYYHYSYSVVRGCDRIVPVDIYVPGCPPTAEALLYGILQLQRRASGAPARW.

4 residues coordinate [4Fe-4S] cluster: cysteine 53, cysteine 54, cysteine 118, and cysteine 148.

Belongs to the complex I 20 kDa subunit family. In terms of assembly, NDH-1 is composed of at least 14 different subunits, Nqo1 to Nqo14. The complex has a L-shaped structure, with the hydrophobic arm (subunits Nqo7, Nqo8, Nqo10 to Nqo14) embedded in the inner membrane and the hydrophilic peripheral arm (subunits Nqo1 to Nqo6, Nqo9) protruding into the bacterial cytoplasm. The hydrophilic domain contains all the redox centers. The cofactor is [4Fe-4S] cluster.

The protein localises to the cell inner membrane. It catalyses the reaction a quinone + NADH + 5 H(+)(in) = a quinol + NAD(+) + 4 H(+)(out). In terms of biological role, NDH-1 shuttles electrons from NADH, via FMN and iron-sulfur (Fe-S) centers, to quinones in the respiratory chain. The immediate electron acceptor for the enzyme in this species is believed to be ubiquinone. Couples the redox reaction to proton translocation (for every two electrons transferred, four hydrogen ions are translocated across the cytoplasmic membrane), and thus conserves the redox energy in a proton gradient. The chain is NADH-quinone oxidoreductase subunit 6 (nqo6) from Paracoccus denitrificans.